Reading from the N-terminus, the 197-residue chain is Double homeobox protein 5 (197 aa).

2 consecutive DNA-binding regions (homeobox) follow at residues 46-105 (GRRM…LRQH) and 121-180 (GRRK…RGQS). Residues 101–127 (QLRQHRRQSRPWPGRRDPQKGRRKRTA) form a disordered region.

It belongs to the paired homeobox family. Expressed in hepatoma Hep3B cells.

It localises to the nucleus. This Homo sapiens (Human) protein is Double homeobox protein 5 (DUX5).